We begin with the raw amino-acid sequence, 183 residues long: Bifunctional protein PyrR (183 aa).

The short motif at valine 100 to threonine 112 is the PRPP-binding element.

Belongs to the purine/pyrimidine phosphoribosyltransferase family. PyrR subfamily.

It carries out the reaction UMP + diphosphate = 5-phospho-alpha-D-ribose 1-diphosphate + uracil. Regulates the transcription of the pyrimidine nucleotide (pyr) operon in response to exogenous pyrimidines. Its function is as follows. Also displays a weak uracil phosphoribosyltransferase activity which is not physiologically significant. This is Bifunctional protein PyrR from Deinococcus deserti (strain DSM 17065 / CIP 109153 / LMG 22923 / VCD115).